The sequence spans 45 residues: Large ribosomal subunit protein bL34 (45 aa).

Residues 1-27 (MTKRTLGGTSRKRKRVSGFRVRMRSHT) are disordered. Positions 10–27 (SRKRKRVSGFRVRMRSHT) are enriched in basic residues.

It belongs to the bacterial ribosomal protein bL34 family.

In Synechococcus sp. (strain CC9902), this protein is Large ribosomal subunit protein bL34.